Here is a 1410-residue protein sequence, read N- to C-terminus: non-specific serine/threonine protein kinase (1410 aa).

In terms of domain architecture, Protein kinase spans Thr27–Phe299. Residues Leu33–Thr41 and Lys54 contribute to the ATP site. The active-site Proton acceptor is the Asp147. 5 HEAT repeats span residues Thr441–His478, Asn485–Leu525, Arg556–Arg594, Lys596–Pro633, and Thr635–Val672. WD repeat units follow at residues Phe1037–Ser1076, Ala1187–Ala1226, and Gly1230–Val1273.

It belongs to the protein kinase superfamily. Ser/Thr protein kinase family. In terms of assembly, component of the autophagy-specific VPS34 PI3-kinase complex I composed of VPS15, VPS30, VPS34, ATG14 and ATG38; and of the VPS34 PI3-kinase complex II composed of VPS15, VPS30, VPS34 and VPS38. In terms of processing, autophosphorylated.

The protein resides in the golgi apparatus. Its subcellular location is the trans-Golgi network membrane. The protein localises to the endosome membrane. The enzyme catalyses L-seryl-[protein] + ATP = O-phospho-L-seryl-[protein] + ADP + H(+). It carries out the reaction L-threonyl-[protein] + ATP = O-phospho-L-threonyl-[protein] + ADP + H(+). Functionally, serine/threonine-protein kinase that plays a role in signaling in modulation of host immune response, intracellular survival and virulence. Required for impediment of phagosomal maturation in THP-1 macrophages. Regulatory subunit of the autophagy-specific VPS34 PI3-kinase complex I essential to recruit the ATG8-phosphatidylinositol conjugate and the ATG12-ATG5 conjugate to the pre-autophagosomal structure. Within the PS34 PI3-kinase complex I, VPS15-mediated phosphorylation of VPS34 may be required for recruiting VPS34 to the membrane but not for activation of its PI3K activity. Is also involved in endosome-to-Golgi retrograde transport as part of the VPS34 PI3-kinase complex II. This second complex is required for the endosome-to-Golgi retrieval of PEP1 and KEX2, and the recruitment of VPS5 and VPS7, two components of the retromer complex, to endosomal membranes (probably through the synthesis of a specific pool of phosphatidylinositol 3-phosphate recruiting the retromer to the endosomes). By regulating VPS34 kinase activity, VPS15 appears to be essential for the efficient delivery of soluble hydrolases to the yeast vacuole. This Candida glabrata (strain ATCC 2001 / BCRC 20586 / JCM 3761 / NBRC 0622 / NRRL Y-65 / CBS 138) (Yeast) protein is non-specific serine/threonine protein kinase.